Here is a 184-residue protein sequence, read N- to C-terminus: Ethylene-responsive transcription factor ERF122 (184 aa).

Residues lysine 120–glutamate 177 constitute a DNA-binding region (AP2/ERF).

This sequence belongs to the AP2/ERF transcription factor family. ERF subfamily.

The protein localises to the nucleus. Functionally, probably acts as a transcriptional activator. Binds to the GCC-box pathogenesis-related promoter element. May be involved in the regulation of gene expression by stress factors and by components of stress signal transduction pathways. This chain is Ethylene-responsive transcription factor ERF122 (ERF122), found in Arabidopsis thaliana (Mouse-ear cress).